Here is a 241-residue protein sequence, read N- to C-terminus: 4-hydroxy-tetrahydrodipicolinate reductase (241 aa).

Residues Ala80–Thr82 and Ser104–Met107 each bind NAD(+). His136 acts as the Proton donor/acceptor in catalysis. A (S)-2,3,4,5-tetrahydrodipicolinate-binding site is contributed by His137. The Proton donor role is filled by Lys140. Gly146–Thr147 lines the (S)-2,3,4,5-tetrahydrodipicolinate pocket.

This sequence belongs to the DapB family.

It is found in the cytoplasm. It catalyses the reaction (S)-2,3,4,5-tetrahydrodipicolinate + NAD(+) + H2O = (2S,4S)-4-hydroxy-2,3,4,5-tetrahydrodipicolinate + NADH + H(+). It carries out the reaction (S)-2,3,4,5-tetrahydrodipicolinate + NADP(+) + H2O = (2S,4S)-4-hydroxy-2,3,4,5-tetrahydrodipicolinate + NADPH + H(+). It participates in amino-acid biosynthesis; L-lysine biosynthesis via DAP pathway; (S)-tetrahydrodipicolinate from L-aspartate: step 4/4. Functionally, catalyzes the conversion of 4-hydroxy-tetrahydrodipicolinate (HTPA) to tetrahydrodipicolinate. In Staphylococcus haemolyticus (strain JCSC1435), this protein is 4-hydroxy-tetrahydrodipicolinate reductase.